A 198-amino-acid chain; its full sequence is Adenine phosphoribosyltransferase (198 aa).

It belongs to the purine/pyrimidine phosphoribosyltransferase family. In terms of assembly, homodimer.

It localises to the cytoplasm. It catalyses the reaction AMP + diphosphate = 5-phospho-alpha-D-ribose 1-diphosphate + adenine. Its pathway is purine metabolism; AMP biosynthesis via salvage pathway; AMP from adenine: step 1/1. Catalyzes a salvage reaction resulting in the formation of AMP, that is energically less costly than de novo synthesis. This Serratia proteamaculans (strain 568) protein is Adenine phosphoribosyltransferase.